We begin with the raw amino-acid sequence, 209 residues long: uncharacterized protein (209 aa).

3 helical membrane-spanning segments follow: residues 26–48 (LRYF…GLAV), 147–169 (AYLV…PFLM), and 179–196 (IVAA…VYLL).

Its subcellular location is the cell membrane. This is an uncharacterized protein from Archaeoglobus fulgidus (strain ATCC 49558 / DSM 4304 / JCM 9628 / NBRC 100126 / VC-16).